The sequence spans 167 residues: Ribosome maturation factor RimM (167 aa).

The PRC barrel domain maps to lysine 93 to leucine 165.

It belongs to the RimM family. As to quaternary structure, binds ribosomal protein uS19.

The protein localises to the cytoplasm. Its function is as follows. An accessory protein needed during the final step in the assembly of 30S ribosomal subunit, possibly for assembly of the head region. Essential for efficient processing of 16S rRNA. May be needed both before and after RbfA during the maturation of 16S rRNA. It has affinity for free ribosomal 30S subunits but not for 70S ribosomes. In Dehalococcoides mccartyi (strain ATCC BAA-2266 / KCTC 15142 / 195) (Dehalococcoides ethenogenes (strain 195)), this protein is Ribosome maturation factor RimM.